The following is a 1379-amino-acid chain: Increased rDNA silencing protein 4 homolog (1379 aa).

Disordered stretches follow at residues 1–25, 138–159, 240–314, 337–370, 534–573, 768–816, 1047–1110, and 1168–1208; these read MDAI…RNLS, TSTR…HHPR, EFDF…PLPS, SQPF…QAIM, ASKR…ASQQ, TDLH…NDIG, DAPS…KDSQ, and AVHE…DGKY. The segment covering 250 to 259 has biased composition (basic and acidic residues); sequence PSDKNLEKLK. Residues 262–287 show a composition bias toward polar residues; it reads ASKQASESQSLKNMESLSLARSSPIL. The segment covering 541-555 has biased composition (low complexity); it reads SQQTESASKSSSNIS. Polar residues predominate over residues 562–573; that stretch reads PPSNFSISASQQ. The segment covering 770 to 780 has biased composition (basic residues); sequence LHRKPRRKHKS. A compositionally biased stretch (acidic residues) spans 793 to 802; it reads DESPQSDEVE. Positions 1240-1329 constitute an EH domain; it reads AANKGYLLSK…DSVWLSSKRM (90 aa). The region spanning 1273–1308 is the EF-hand domain; it reads APTSVLAKIYDLVDRHHTGVLGRDEFIVGMFLIDQY.

It belongs to the IRS4 family.

Its function is as follows. Positive regulator of phosphatidylinositol 4,5-bisphosphate turnover and negatively regulates signaling through the cell integrity pathway. Involved in rDNA silencing. The protein is Increased rDNA silencing protein 4 homolog of Schizosaccharomyces pombe (strain 972 / ATCC 24843) (Fission yeast).